Reading from the N-terminus, the 131-residue chain is MSWQAYVDDHLMCDIDGHHLTAAAILGHDGSVWAQSSTFPKFKPEEITAIMKDFDEPGSLAPTGLHLGGTKYMVIQGEGGAVIRGKKGSGGVTVKKTSQALVFGIYEEPLTPGQCNMIVERLGDYLIDQGL.

It belongs to the profilin family. As to quaternary structure, occurs in many kinds of cells as a complex with monomeric actin in a 1:1 ratio.

The protein resides in the cytoplasm. The protein localises to the cytoskeleton. In terms of biological role, binds to actin and affects the structure of the cytoskeleton. At high concentrations, profilin prevents the polymerization of actin, whereas it enhances it at low concentrations. By binding to PIP2, it inhibits the formation of IP3 and DG. This is Profilin from Pyrus communis (Pear).